We begin with the raw amino-acid sequence, 417 residues long: MKATRDHASAPFCTRFNHSDPGIWAAERAVEAPNNLTLPPEPSEDCGSVSVAFSMTMMITGFVGNALAITLVSKSYRRREGKRKKSFLLCIGWLALTDMVGQLLTSPVVIVLYLSHQRWEQLDPSGRLCTFFGLTMTVFGLSSLFIASAMAVERALATRAPHWYSSHMKTSVTRAVLLGVWLAVLAFALLPVLGVGQYTIQWPGTWCFISTGPGGNGTNSRQNWGNVFFASAFAILGLSALVVTFACNLATIKALVSRCRAKATASQSSAQWGRITTETAIQLMGIMCVLSVCWSPLLIMMLKMIFNHTSVEHCKTYTENQDECNFFLIAVRLASLNQILDPWVYLLLRKILLQKFCQLLKGHSYGLDTEGGTENKDKEMKENLYISNLSRFFILLGHFTEARRGRGHIYLHTLEHQ.

The Extracellular portion of the chain corresponds to 1–52 (MKATRDHASAPFCTRFNHSDPGIWAAERAVEAPNNLTLPPEPSEDCGSVSVA). 2 N-linked (GlcNAc...) asparagine glycosylation sites follow: N17 and N35. Residues 53 to 77 (FSMTMMITGFVGNALAITLVSKSYR) form a helical membrane-spanning segment. Topologically, residues 78–90 (RREGKRKKSFLLC) are cytoplasmic. Residues 91-111 (IGWLALTDMVGQLLTSPVVIV) form a helical membrane-spanning segment. Topologically, residues 112–130 (LYLSHQRWEQLDPSGRLCT) are extracellular. A helical transmembrane segment spans residues 131–152 (FFGLTMTVFGLSSLFIASAMAV). Over 153–174 (ERALATRAPHWYSSHMKTSVTR) the chain is Cytoplasmic. Residues 175-196 (AVLLGVWLAVLAFALLPVLGVG) form a helical membrane-spanning segment. Topologically, residues 197–226 (QYTIQWPGTWCFISTGPGGNGTNSRQNWGN) are extracellular. N216 carries N-linked (GlcNAc...) asparagine glycosylation. The chain crosses the membrane as a helical span at residues 227–252 (VFFASAFAILGLSALVVTFACNLATI). Over 253 to 282 (KALVSRCRAKATASQSSAQWGRITTETAIQ) the chain is Cytoplasmic. The helical transmembrane segment at 283–306 (LMGIMCVLSVCWSPLLIMMLKMIF) threads the bilayer. N-linked (GlcNAc...) asparagine glycosylation is present at N307. Residues 307–326 (NHTSVEHCKTYTENQDECNF) are Extracellular-facing. A helical transmembrane segment spans residues 327-348 (FLIAVRLASLNQILDPWVYLLL). Residues 349-417 (RKILLQKFCQ…HIYLHTLEHQ (69 aa)) are Cytoplasmic-facing.

This sequence belongs to the G-protein coupled receptor 1 family. As to quaternary structure, interacts (via C-terminus) with MKLN1.

It localises to the cell membrane. Receptor for prostaglandin E2 (PGE2). The various isoforms have identical ligand binding properties but interact with different second messenger systems: isoform EP3A couples to G(i)/G(o) proteins; isoform EP3B and isoform EP3C couple to G(s), and isoform EP3D couples to G(i), G(s) and G(p). Required for normal development of fever in response to pyrinogens, including IL1B, prostaglandin E2 and bacterial lipopolysaccharide (LPS). Required for normal potentiation of platelet aggregation by prostaglandin E2, and thus plays a role in the regulation of blood coagulation. Required for increased HCO3(-) secretion in the duodenum in response to mucosal acidification, and thereby contributes to the protection of the mucosa against acid-induced ulceration. Not required for normal kidney function, normal urine volume and osmolality. The sequence is that of Prostaglandin E2 receptor EP3 subtype (PTGER3) from Bos taurus (Bovine).